The following is an 887-amino-acid chain: Alanine--tRNA ligase (887 aa).

Residues H564, H568, C676, and H680 each contribute to the Zn(2+) site.

It belongs to the class-II aminoacyl-tRNA synthetase family. Requires Zn(2+) as cofactor.

It localises to the cytoplasm. It carries out the reaction tRNA(Ala) + L-alanine + ATP = L-alanyl-tRNA(Ala) + AMP + diphosphate. Functionally, catalyzes the attachment of alanine to tRNA(Ala) in a two-step reaction: alanine is first activated by ATP to form Ala-AMP and then transferred to the acceptor end of tRNA(Ala). Also edits incorrectly charged Ser-tRNA(Ala) and Gly-tRNA(Ala) via its editing domain. In Chelativorans sp. (strain BNC1), this protein is Alanine--tRNA ligase.